A 115-amino-acid chain; its full sequence is Large ribosomal subunit protein bL19 (115 aa).

Belongs to the bacterial ribosomal protein bL19 family.

Functionally, this protein is located at the 30S-50S ribosomal subunit interface and may play a role in the structure and function of the aminoacyl-tRNA binding site. In Leifsonia xyli subsp. xyli (strain CTCB07), this protein is Large ribosomal subunit protein bL19.